A 135-amino-acid polypeptide reads, in one-letter code: Histone H3.3C (135 aa).

Residues M1–Y41 form a disordered region. An Asymmetric dimethylarginine; by PRMT6; alternate modification is found at R3. R3 is subject to Citrulline; alternate. The residue at position 4 (T4) is a Phosphothreonine; by HASPIN. At K5 the chain carries Allysine; alternate. An N6,N6,N6-trimethyllysine; alternate modification is found at K5. An N6,N6-dimethyllysine; alternate modification is found at K5. At K5 the chain carries N6-(2-hydroxyisobutyryl)lysine; alternate. At K5 the chain carries N6-(beta-hydroxybutyryl)lysine; alternate. K5 bears the N6-acetyllysine; alternate mark. K5 is subject to N6-methyllysine; alternate. Position 6 is a 5-glutamyl dopamine; alternate (Q6). Residue Q6 is modified to 5-glutamyl serotonin; alternate. Phosphothreonine; by PKC is present on T7. R9 carries the post-translational modification Citrulline; alternate. R9 bears the Symmetric dimethylarginine; by PRMT5; alternate mark. An N6,N6,N6-trimethyllysine; alternate modification is found at K10. At K10 the chain carries N6,N6-dimethyllysine; alternate. K10 is subject to N6-(2-hydroxyisobutyryl)lysine; alternate. The residue at position 10 (K10) is an N6-(beta-hydroxybutyryl)lysine; alternate. K10 is subject to N6-acetyllysine; alternate. The residue at position 10 (K10) is an N6-methyllysine; alternate. The residue at position 10 (K10) is an N6-lactoyllysine; alternate. S11 carries the ADP-ribosylserine; alternate modification. S11 carries the post-translational modification Phosphoserine; alternate; by AURKB, AURKC, RPS6KA3, RPS6KA4 and RPS6KA5. T12 carries the post-translational modification Phosphothreonine; by PKC. K15 carries the N6-(2-hydroxyisobutyryl)lysine; alternate modification. At K15 the chain carries N6-(beta-hydroxybutyryl)lysine; alternate. Position 15 is an N6-acetyllysine; alternate (K15). K15 bears the N6-lactoyllysine; alternate mark. Residue K15 is modified to N6-glutaryllysine; alternate. K15 carries the N6-succinyllysine; alternate modification. R18 is modified (citrulline; alternate). Residue R18 is modified to Asymmetric dimethylarginine; by CARM1; alternate. An N6-(2-hydroxyisobutyryl)lysine; alternate mark is found at K19 and K24. An N6-(beta-hydroxybutyryl)lysine; alternate mark is found at K19 and K24. Residues K19 and K24 each carry the N6-acetyllysine; alternate modification. Residues K19 and K24 each carry the N6-methyllysine; alternate modification. K19 and K24 each carry N6-lactoyllysine; alternate. An N6-glutaryllysine; alternate mark is found at K19 and K24. Residues K19 and K24 each carry the N6-butyryllysine; alternate modification. Residue R27 is modified to Citrulline. An N6,N6,N6-trimethyllysine; alternate modification is found at K28. At K28 the chain carries N6,N6-dimethyllysine; alternate. N6-(2-hydroxyisobutyryl)lysine; alternate is present on K28. The residue at position 28 (K28) is an N6-acetyllysine; alternate. An N6-methyllysine; alternate modification is found at K28. K28 carries the N6-lactoyllysine; alternate modification. N6-glutaryllysine; alternate is present on K28. S29 carries the post-translational modification ADP-ribosylserine; alternate. A Phosphoserine; alternate; by AURKB, AURKC and RPS6KA5 modification is found at S29. S32 carries the post-translational modification Phosphoserine. At K37 the chain carries N6-methyllysine. Y41 carries the phosphotyrosine modification. At K56 the chain carries N6,N6,N6-trimethyllysine; alternate. Position 56 is an N6-(2-hydroxyisobutyryl)lysine; alternate (K56). Residue K56 is modified to N6-(beta-hydroxybutyryl)lysine; alternate. K56 carries the N6-acetyllysine; alternate modification. K56 carries the post-translational modification N6-lactoyllysine; alternate. At K56 the chain carries N6-glutaryllysine; alternate. K56 carries the post-translational modification N6-succinyllysine; alternate. Position 56 is an N6-methyllysine; by EHMT2; alternate (K56). At S57 the chain carries Phosphoserine. K64 is subject to N6-(2-hydroxyisobutyryl)lysine; alternate. K64 is modified (N6-methyllysine; alternate). Position 80 is a phosphothreonine (T80). Residue S86 is modified to Phosphoserine. Residue T107 is modified to Phosphothreonine. K115 and K122 each carry N6-glutaryllysine; alternate. K115 is modified (N6-acetyllysine). Residue K122 is modified to N6-(2-hydroxyisobutyryl)lysine; alternate. K122 carries the post-translational modification N6-acetyllysine; alternate. K122 carries the post-translational modification N6-methyllysine; alternate. K122 is subject to N6-succinyllysine; alternate.

Belongs to the histone H3 family. The nucleosome is a histone octamer containing two molecules each of H2A, H2B, H3 and H4 assembled in one H3-H4 heterotetramer and two H2A-H2B heterodimers. The octamer wraps approximately 147 bp of DNA. In terms of processing, acetylation is generally linked to gene activation. Acetylation on Lys-10 (H3K9ac) impairs methylation at Arg-9 (H3R8me2s). Acetylation on Lys-19 (H3K18ac) and Lys-24 (H3K24ac) favors methylation at Arg-18 (H3R17me). Acetylation at Lys-122 (H3K122ac) by EP300/p300 plays a central role in chromatin structure: localizes at the surface of the histone octamer and stimulates transcription, possibly by promoting nucleosome instability. Post-translationally, citrullination at Arg-9 (H3R8ci) and/or Arg-18 (H3R17ci) by PADI4 impairs methylation and represses transcription. Asymmetric dimethylation at Arg-18 (H3R17me2a) by CARM1 is linked to gene activation. Symmetric dimethylation at Arg-9 (H3R8me2s) by PRMT5 is linked to gene repression. Asymmetric dimethylation at Arg-3 (H3R2me2a) by PRMT6 is linked to gene repression and is mutually exclusive with H3 Lys-5 methylation (H3K4me2 and H3K4me3). H3R2me2a is present at the 3' of genes regardless of their transcription state and is enriched on inactive promoters, while it is absent on active promoters. In terms of processing, methylation at Lys-5 (H3K4me) is linked to gene activation. Methylation at Lys-5 (H3K4me) facilitates subsequent acetylation of H3 and H4. Methylation at Lys-10 (H3K9me) and Lys-28 (H3K27me) are linked to gene repression. Methylation at Lys-10 (H3K9me) is a specific target for HP1 proteins (CBX1, CBX3 and CBX5) and prevents subsequent phosphorylation at Ser-11 (H3S10ph) and acetylation of H3 and H4. Methylation at Lys-5 (H3K4me) requires preliminary monoubiquitination of H2B at 'Lys-120'. Methylation at Lys-10 (H3K9me) and Lys-28 (H3K27me) are enriched in inactive X chromosome chromatin. Monomethylation at Lys-56 (H3K56me1) by EHMT2/G9A in G1 phase promotes interaction with PCNA and is required for DNA replication. Post-translationally, phosphorylated at Thr-4 (H3T3ph) by HASPIN during prophase and dephosphorylated during anaphase. Phosphorylation at Ser-11 (H3S10ph) by AURKB is crucial for chromosome condensation and cell-cycle progression during mitosis and meiosis. In addition phosphorylation at Ser-11 (H3S10ph) by RPS6KA4 and RPS6KA5 is important during interphase because it enables the transcription of genes following external stimulation, like mitogens, stress, growth factors or UV irradiation and result in the activation of genes, such as c-fos and c-jun. Phosphorylation at Ser-11 (H3S10ph), which is linked to gene activation, prevents methylation at Lys-10 (H3K9me) but facilitates acetylation of H3 and H4. Phosphorylation at Ser-11 (H3S10ph) by AURKB mediates the dissociation of HP1 proteins (CBX1, CBX3 and CBX5) from heterochromatin. Phosphorylation at Ser-11 (H3S10ph) is also an essential regulatory mechanism for neoplastic cell transformation. Phosphorylated at Ser-29 (H3S28ph) by MAP3K20 isoform 1, RPS6KA5 or AURKB during mitosis or upon ultraviolet B irradiation. Phosphorylation at Thr-7 (H3T6ph) by PRKCB is a specific tag for epigenetic transcriptional activation that prevents demethylation of Lys-5 (H3K4me) by LSD1/KDM1A. At centromeres, specifically phosphorylated at Thr-12 (H3T11ph) from prophase to early anaphase, by DAPK3 and PKN1. Phosphorylation at Thr-12 (H3T11ph) by PKN1 or isoform M2 of PKM (PKM2) is a specific tag for epigenetic transcriptional activation that promotes demethylation of Lys-10 (H3K9me) by KDM4C/JMJD2C. Phosphorylation at Tyr-41 (H3Y41ph) by JAK2 promotes exclusion of CBX5 (HP1 alpha) from chromatin. Lysine deamination at Lys-5 (H3K4all) to form allysine is mediated by LOXL2. Allysine formation by LOXL2 only takes place on H3K4me3 and results in gene repression. In terms of processing, butyrylation of histones marks active promoters and competes with histone acetylation. It is present during late spermatogenesis. Post-translationally, succinylated. Desuccinylation at Lys-122 (H3K122succ) by SIRT7 in response to DNA damage promotes chromatin condensation and double-strand breaks (DSBs) repair. Serine ADP-ribosylation constitutes the primary form of ADP-ribosylation of proteins in response to DNA damage. Serine ADP-ribosylation at Ser-11 (H3S10ADPr) is mutually exclusive with phosphorylation at Ser-11 (H3S10ph) and impairs acetylation at Lys-10 (H3K9ac). In terms of tissue distribution, specifically expressed in the seminiferous tubules of testis.

The protein resides in the nucleus. Its subcellular location is the chromosome. Functionally, core component of nucleosome. Nucleosomes wrap and compact DNA into chromatin, limiting DNA accessibility to the cellular machineries which require DNA as a template. Histones thereby play a central role in transcription regulation, DNA repair, DNA replication and chromosomal stability. DNA accessibility is regulated via a complex set of post-translational modifications of histones, also called histone code, and nucleosome remodeling. Hominid-specific H3.5/H3F3C preferentially colocalizes with euchromatin, and it is associated with actively transcribed genes. In Homo sapiens (Human), this protein is Histone H3.3C.